Reading from the N-terminus, the 459-residue chain is FBD-associated F-box protein At5g27750 (459 aa).

In terms of domain architecture, F-box spans 4–50 (FDRISELPESLITQILLCLPTKDSVKTSVLSTRWKNLWLNVPGLDLT). Residues 374–426 (TEELNLINVPRCIVSTLECVEIKGLFEWEEEEMKIARYFLENAAVLKKLTMSF) form the FBD domain.

The chain is FBD-associated F-box protein At5g27750 from Arabidopsis thaliana (Mouse-ear cress).